The sequence spans 107 residues: Nucleoid-associated protein A1C_06705 (107 aa).

Belongs to the YbaB/EbfC family. As to quaternary structure, homodimer.

Its subcellular location is the cytoplasm. The protein localises to the nucleoid. Its function is as follows. Binds to DNA and alters its conformation. May be involved in regulation of gene expression, nucleoid organization and DNA protection. The protein is Nucleoid-associated protein A1C_06705 of Rickettsia akari (strain Hartford).